The primary structure comprises 138 residues: Putative pre-16S rRNA nuclease (138 aa).

The protein belongs to the YqgF nuclease family.

Its subcellular location is the cytoplasm. Functionally, could be a nuclease involved in processing of the 5'-end of pre-16S rRNA. The chain is Putative pre-16S rRNA nuclease from Listeria monocytogenes serovar 1/2a (strain ATCC BAA-679 / EGD-e).